Consider the following 145-residue polypeptide: Ribosomal RNA large subunit methyltransferase H (145 aa).

S-adenosyl-L-methionine-binding positions include Leu-64, Gly-93, and Leu-112–Phe-117.

The protein belongs to the RNA methyltransferase RlmH family. In terms of assembly, homodimer.

The protein localises to the cytoplasm. It catalyses the reaction pseudouridine(1915) in 23S rRNA + S-adenosyl-L-methionine = N(3)-methylpseudouridine(1915) in 23S rRNA + S-adenosyl-L-homocysteine + H(+). Functionally, specifically methylates the pseudouridine at position 1915 (m3Psi1915) in 23S rRNA. The protein is Ribosomal RNA large subunit methyltransferase H of Prochlorococcus marinus (strain NATL1A).